The following is a 393-amino-acid chain: Formate-dependent phosphoribosylglycinamide formyltransferase (393 aa).

Residues 22-23 and E82 each bind N(1)-(5-phospho-beta-D-ribosyl)glycinamide; that span reads EL. Residues R114, K155, 160 to 165, 195 to 198, and E203 contribute to the ATP site; these read SSGHGQ and EGFV. Residues 119–308 form the ATP-grasp domain; it reads RLAAEELGLP…QFALHARAVL (190 aa). 2 residues coordinate Mg(2+): E267 and E279. N(1)-(5-phospho-beta-D-ribosyl)glycinamide-binding positions include D286, K356, and 363–364; that span reads RR.

The protein belongs to the PurK/PurT family. As to quaternary structure, homodimer.

The enzyme catalyses N(1)-(5-phospho-beta-D-ribosyl)glycinamide + formate + ATP = N(2)-formyl-N(1)-(5-phospho-beta-D-ribosyl)glycinamide + ADP + phosphate + H(+). It participates in purine metabolism; IMP biosynthesis via de novo pathway; N(2)-formyl-N(1)-(5-phospho-D-ribosyl)glycinamide from N(1)-(5-phospho-D-ribosyl)glycinamide (formate route): step 1/1. Involved in the de novo purine biosynthesis. Catalyzes the transfer of formate to 5-phospho-ribosyl-glycinamide (GAR), producing 5-phospho-ribosyl-N-formylglycinamide (FGAR). Formate is provided by PurU via hydrolysis of 10-formyl-tetrahydrofolate. The protein is Formate-dependent phosphoribosylglycinamide formyltransferase of Parabacteroides distasonis (strain ATCC 8503 / DSM 20701 / CIP 104284 / JCM 5825 / NCTC 11152).